Consider the following 421-residue polypeptide: 26S proteasome non-ATPase regulatory subunit 11A (421 aa).

The 165-residue stretch at 227–391 (AYSYFYEAFE…GVLIVFDEPP (165 aa)) folds into the PCI domain.

Belongs to the proteasome subunit S9 family. In terms of assembly, component of the lid subcomplex of the 19S proteasome regulatory particle complex (also named PA700 complex). The 26S proteasome consists of a 20S proteasome core and two 19S regulatory subunits.

The protein resides in the nucleus. It is found in the cytoplasm. The protein localises to the cytosol. In terms of biological role, component of the lid subcomplex of the 26S proteasome, a multiprotein complex involved in the ATP-dependent degradation of ubiquitinated proteins. In the complex, psmd11a is required for proteasome assembly. This chain is 26S proteasome non-ATPase regulatory subunit 11A (psmd11a), found in Danio rerio (Zebrafish).